Here is a 297-residue protein sequence, read N- to C-terminus: 4-hydroxy-tetrahydrodipicolinate synthase (297 aa).

T50 contributes to the pyruvate binding site. Residue Y138 is the Proton donor/acceptor of the active site. The active-site Schiff-base intermediate with substrate is K166. I208 is a pyruvate binding site.

It belongs to the DapA family. Homotetramer; dimer of dimers.

It is found in the cytoplasm. It catalyses the reaction L-aspartate 4-semialdehyde + pyruvate = (2S,4S)-4-hydroxy-2,3,4,5-tetrahydrodipicolinate + H2O + H(+). It participates in amino-acid biosynthesis; L-lysine biosynthesis via DAP pathway; (S)-tetrahydrodipicolinate from L-aspartate: step 3/4. Catalyzes the condensation of (S)-aspartate-beta-semialdehyde [(S)-ASA] and pyruvate to 4-hydroxy-tetrahydrodipicolinate (HTPA). The sequence is that of 4-hydroxy-tetrahydrodipicolinate synthase from Haemophilus ducreyi (strain 35000HP / ATCC 700724).